Here is a 97-residue protein sequence, read N- to C-terminus: Nucleoid-associated protein HPP12_0031 (97 aa).

It belongs to the YbaB/EbfC family. In terms of assembly, homodimer.

Its subcellular location is the cytoplasm. The protein localises to the nucleoid. Its function is as follows. Binds to DNA and alters its conformation. May be involved in regulation of gene expression, nucleoid organization and DNA protection. This is Nucleoid-associated protein HPP12_0031 from Helicobacter pylori (strain P12).